The chain runs to 179 residues: O-acetyl-ADP-ribose deacetylase (179 aa).

Residues 1–175 (MTSRLQVIQG…LYARLLTQQG (175 aa)) enclose the Macro domain. Substrate is bound by residues 11 to 12 (DI), Asn25, 33 to 35 (GVD), and 122 to 126 (STGVY). The active-site Proton acceptor is the Asp35.

It belongs to the MacroD-type family. YmdB subfamily. In terms of assembly, homodimer. Interacts with RNase III.

The enzyme catalyses 3''-O-acetyl-ADP-D-ribose + H2O = ADP-D-ribose + acetate + H(+). It carries out the reaction 2''-O-acetyl-ADP-D-ribose + H2O = ADP-D-ribose + acetate + H(+). Deacetylates O-acetyl-ADP ribose to yield ADP-ribose and free acetate. Down-regulates ribonuclease 3 (RNase III) activity. Acts by interacting directly with the region of the ribonuclease that is required for dimerization/activation. The protein is O-acetyl-ADP-ribose deacetylase of Salmonella gallinarum (strain 287/91 / NCTC 13346).